A 403-amino-acid polypeptide reads, in one-letter code: MLRWTTAGESHGQALIAMLEHMPAGVPISREEISFQLGRRRLGFGRGARMKFEADEVSILGGVRHGYTIGSPIAIMVGNTEWPKWTTIMSADAIDESDPDVAAAMSSGRGARLTRPRPGHADFAGMVKYNHDEARPILERSSARETAARVAAATVARSFLRETLGVEVFSHVISIGRSEIDQTVCPTFEDLGRIDDSPVRSASAQAEASMIDQINAAKKQGDTLGGIVEVIVNGLPIGLGSHISGEDRLDAQLAAALMGIQAIKGVEIGDGFEEARRLGSEAHDEIVLRDGVVARQSNRAGGIEGGMTNGESLRVRAAMKPISTVPRALQSIDMDSGKRATGIHQRSDVCAVPAAGVVAEAMVALVLARAVLEKFGGDSLAETKRNIAAYNEYVKTRIAFDGE.

2 residues coordinate NADP(+): Arg40 and Arg46. Residues 140–142 (RSS), 261–262 (QA), Gly305, 320–324 (KPIST), and Arg346 each bind FMN.

This sequence belongs to the chorismate synthase family. As to quaternary structure, homotetramer. FMNH2 serves as cofactor.

The catalysed reaction is 5-O-(1-carboxyvinyl)-3-phosphoshikimate = chorismate + phosphate. It functions in the pathway metabolic intermediate biosynthesis; chorismate biosynthesis; chorismate from D-erythrose 4-phosphate and phosphoenolpyruvate: step 7/7. In terms of biological role, catalyzes the anti-1,4-elimination of the C-3 phosphate and the C-6 proR hydrogen from 5-enolpyruvylshikimate-3-phosphate (EPSP) to yield chorismate, which is the branch point compound that serves as the starting substrate for the three terminal pathways of aromatic amino acid biosynthesis. This reaction introduces a second double bond into the aromatic ring system. This Corynebacterium diphtheriae (strain ATCC 700971 / NCTC 13129 / Biotype gravis) protein is Chorismate synthase.